Reading from the N-terminus, the 245-residue chain is Zinc finger CCCH domain-containing protein 54 (245 aa).

A C3H1-type zinc finger spans residues 92–119; sequence TYCAVACPAFRNGACHRGDSCEFAHGVF. Residues 175–204 are disordered; that stretch reads GNGDGVTMRMDDEGYDTSRSPVRSGKDDLD.

In terms of assembly, interacts with MARD1/FLZ9 and RD21A. In terms of tissue distribution, specifically expressed in embryo (at protein level).

The protein resides in the nucleus. Functionally, embryo-specific transcription factor required at the globular to heart stage transition in embryo development. This chain is Zinc finger CCCH domain-containing protein 54, found in Arabidopsis thaliana (Mouse-ear cress).